We begin with the raw amino-acid sequence, 638 residues long: Zinc finger protein 143 (638 aa).

The residue at position 1 (Met-1) is an N-acetylmethionine. Residue Lys-213 forms a Glycyl lysine isopeptide (Lys-Gly) (interchain with G-Cter in SUMO2) linkage. 4 consecutive C2H2-type zinc fingers follow at residues 237 to 261, 267 to 291, 297 to 321, and 327 to 351; these read FRCK…ERSH, YQCE…FRTH, YRCS…IRTH, and FKCP…IRTH. Thr-352 carries the post-translational modification Phosphothreonine. C2H2-type zinc fingers lie at residues 357–381, 387–411, and 417–440; these read YYCT…VRIH, YVCT…HVVH, and YNCN…RTAH. Lys-406 is covalently cross-linked (Glycyl lysine isopeptide (Lys-Gly) (interchain with G-Cter in SUMO2)).

This sequence belongs to the GLI C2H2-type zinc-finger protein family. Interacts with CHD8. Forms a complex with HCFC1 and ZNF143.

It is found in the nucleus. In terms of biological role, transcriptional activator. In complex with HCFC1 and ZNF143, regulates the expression of several genes, including AP2S1, ESCO2, OPHN1, RBL1, UBXN8 and ZNF32. Activates the gene for selenocysteine tRNA (tRNAsec). Binds to the SPH motif of small nuclear RNA (snRNA) gene promoters. Participates in efficient U6 RNA polymerase III transcription via its interaction with CHD8. The chain is Zinc finger protein 143 (Znf143) from Rattus norvegicus (Rat).